A 183-amino-acid chain; its full sequence is Peptide deformylase (183 aa).

Residues Cys-110 and His-153 each coordinate Fe cation. Glu-154 is a catalytic residue. Position 157 (His-157) interacts with Fe cation.

Belongs to the polypeptide deformylase family. Fe(2+) is required as a cofactor.

The enzyme catalyses N-terminal N-formyl-L-methionyl-[peptide] + H2O = N-terminal L-methionyl-[peptide] + formate. Functionally, removes the formyl group from the N-terminal Met of newly synthesized proteins. Requires at least a dipeptide for an efficient rate of reaction. N-terminal L-methionine is a prerequisite for activity but the enzyme has broad specificity at other positions. This chain is Peptide deformylase, found in Listeria monocytogenes serovar 1/2a (strain ATCC BAA-679 / EGD-e).